The chain runs to 211 residues: Small ribosomal subunit protein bS6c alpha (211 aa).

Positions 1 to 19 are enriched in low complexity; that stretch reads MATFSLTSTLPSSSPTTSL. Disordered stretches follow at residues 1-25 and 80-100; these read MATF…IPKP and DEDP…PEPQ. The N-terminal 65 residues, 1 to 65, are a transit peptide targeting the chloroplast; it reads MATFSLTSTL…YGPYVKAIAL (65 aa).

Belongs to the bacterial ribosomal protein bS6 family. As to quaternary structure, component of the chloroplast small ribosomal subunit (SSU). Mature 70S chloroplast ribosomes of higher plants consist of a small (30S) and a large (50S) subunit. The 30S small subunit contains 1 molecule of ribosomal RNA (16S rRNA) and 24 different proteins. The 50S large subunit contains 3 rRNA molecules (23S, 5S and 4.5S rRNA) and 33 different proteins.

The protein localises to the plastid. The protein resides in the chloroplast. In terms of biological role, component of the chloroplast ribosome (chloro-ribosome), a dedicated translation machinery responsible for the synthesis of chloroplast genome-encoded proteins, including proteins of the transcription and translation machinery and components of the photosynthetic apparatus. This chain is Small ribosomal subunit protein bS6c alpha (RPS6), found in Spinacia oleracea (Spinach).